A 565-amino-acid chain; its full sequence is UvrABC system protein C (565 aa).

Positions 12 to 89 constitute a GIY-YIG domain; the sequence is EEPGVYIFKN…IRTHKPKYNV (78 aa). The region spanning 195–230 is the UVR domain; that stretch reads KDVLPTLYEKIEQYASNLAFEKAAFLRDQVLVLQNI.

This sequence belongs to the UvrC family. In terms of assembly, interacts with UvrB in an incision complex.

The protein localises to the cytoplasm. Functionally, the UvrABC repair system catalyzes the recognition and processing of DNA lesions. UvrC both incises the 5' and 3' sides of the lesion. The N-terminal half is responsible for the 3' incision and the C-terminal half is responsible for the 5' incision. This Hydrogenobaculum sp. (strain Y04AAS1) protein is UvrABC system protein C.